The primary structure comprises 83 residues: Large ribosomal subunit protein bL31B (83 aa).

The protein belongs to the bacterial ribosomal protein bL31 family. Type B subfamily. As to quaternary structure, part of the 50S ribosomal subunit.

The chain is Large ribosomal subunit protein bL31B from Levilactobacillus brevis (strain ATCC 367 / BCRC 12310 / CIP 105137 / JCM 1170 / LMG 11437 / NCIMB 947 / NCTC 947) (Lactobacillus brevis).